A 187-amino-acid polypeptide reads, in one-letter code: Peptidyl-tRNA hydrolase (187 aa).

Position 18 (tyrosine 18) interacts with tRNA. Residue histidine 23 is the Proton acceptor of the active site. TRNA is bound by residues phenylalanine 65, asparagine 67, and asparagine 113.

The protein belongs to the PTH family. In terms of assembly, monomer.

The protein resides in the cytoplasm. The enzyme catalyses an N-acyl-L-alpha-aminoacyl-tRNA + H2O = an N-acyl-L-amino acid + a tRNA + H(+). Hydrolyzes ribosome-free peptidyl-tRNAs (with 1 or more amino acids incorporated), which drop off the ribosome during protein synthesis, or as a result of ribosome stalling. Functionally, catalyzes the release of premature peptidyl moieties from peptidyl-tRNA molecules trapped in stalled 50S ribosomal subunits, and thus maintains levels of free tRNAs and 50S ribosomes. In Coxiella burnetii (strain CbuK_Q154) (Coxiella burnetii (strain Q154)), this protein is Peptidyl-tRNA hydrolase.